A 664-amino-acid polypeptide reads, in one-letter code: Serine/threonine-protein kinase PknD (664 aa).

Residues 1–381 (MSDAVPQVGS…PAGNKRKVWA (381 aa)) lie on the Cytoplasmic side of the membrane. A Protein kinase domain is found at 15 to 276 (YQLLRLLGRG…DLAIAAHDAL (262 aa)). ATP contacts are provided by residues 21-29 (LGRGGMGEV) and Lys-44. Position 135 is a phosphothreonine; by autocatalysis (Thr-135). Catalysis depends on Asp-138, which acts as the Proton acceptor. Phosphothreonine; by autocatalysis is present on residues Thr-169, Thr-171, Thr-173, and Thr-209. Positions 303–333 (TGLSQSESGIAGAGTGPPTPGAARWSPGDSA) are disordered. Residues 382-402 (VVGAAAIVLVAIVAAAGYLVL) form a helical membrane-spanning segment. Over 403-664 (RPSWSPTQAS…GNDRVVKLTS (262 aa)) the chain is Extracellular. NHL repeat units lie at residues 414 to 456 (QTVL…LATG), 457 to 497 (STGT…LAAG), 498 to 539 (SNNQ…LAAG), 540 to 581 (SKTQ…LEAE), 582 to 623 (SNNQ…LLAG), and 624 to 664 (STTS…KLTS).

This sequence belongs to the protein kinase superfamily. Ser/Thr protein kinase family. In terms of assembly, homodimer. The extracellular domain interacts with host laminin. Autophosphorylated. Dephosphorylated by PstP.

Its subcellular location is the cell membrane. It catalyses the reaction L-seryl-[protein] + ATP = O-phospho-L-seryl-[protein] + ADP + H(+). It carries out the reaction L-threonyl-[protein] + ATP = O-phospho-L-threonyl-[protein] + ADP + H(+). With respect to regulation, dimerization activates the kinase domain of unphosphorylated PknD via an allosteric mechanism, triggering autophosphorylation and phosphorylation of target proteins. Phosphorylated PknD is fully active even in the absence of dimerization. Its function is as follows. Part of a signaling pathway that enables adaptation to osmotic stress through cell wall remodeling and virulence factor production. Functionally, key microbial factor required for central nervous system tuberculosis. Required for invasion of host brain endothelia, but not macrophages, lung epithelia or other endothelia. The protein is Serine/threonine-protein kinase PknD (pknD) of Mycobacterium tuberculosis (strain CDC 1551 / Oshkosh).